Consider the following 392-residue polypeptide: Phosphoglycerate kinase (392 aa).

Substrate contacts are provided by residues 21 to 23, Arg36, 59 to 62, Arg113, and Arg146; these read DFN and HLGR. Residues Lys197, Glu319, and 345 to 348 each bind ATP; that span reads GGDT.

Belongs to the phosphoglycerate kinase family. As to quaternary structure, monomer.

It localises to the cytoplasm. It carries out the reaction (2R)-3-phosphoglycerate + ATP = (2R)-3-phospho-glyceroyl phosphate + ADP. It participates in carbohydrate degradation; glycolysis; pyruvate from D-glyceraldehyde 3-phosphate: step 2/5. The sequence is that of Phosphoglycerate kinase from Francisella tularensis subsp. holarctica (strain FTNF002-00 / FTA).